The chain runs to 150 residues: UPF0201 protein APE_1751 (150 aa).

This sequence belongs to the UPF0201 family.

This chain is UPF0201 protein APE_1751, found in Aeropyrum pernix (strain ATCC 700893 / DSM 11879 / JCM 9820 / NBRC 100138 / K1).